A 159-amino-acid chain; its full sequence is Phosphopantetheine adenylyltransferase (159 aa).

Thr-10 contributes to the substrate binding site. Residues 10-11 (TF) and His-18 contribute to the ATP site. Residues Lys-42, Met-74, and Arg-88 each contribute to the substrate site. ATP is bound by residues 89–91 (GLR), Glu-99, and 124–130 (WSFISSS).

This sequence belongs to the bacterial CoaD family. In terms of assembly, homohexamer. Mg(2+) serves as cofactor.

It is found in the cytoplasm. It carries out the reaction (R)-4'-phosphopantetheine + ATP + H(+) = 3'-dephospho-CoA + diphosphate. Its pathway is cofactor biosynthesis; coenzyme A biosynthesis; CoA from (R)-pantothenate: step 4/5. Its function is as follows. Reversibly transfers an adenylyl group from ATP to 4'-phosphopantetheine, yielding dephospho-CoA (dPCoA) and pyrophosphate. This chain is Phosphopantetheine adenylyltransferase, found in Klebsiella pneumoniae subsp. pneumoniae (strain ATCC 700721 / MGH 78578).